Reading from the N-terminus, the 2169-residue chain is MVGRKVDREIIARRNSRRDGMMMKLNFCFFFCRRWWAFLLLQLHMLQALAQDDVAPYFKTEPGLPQIHLEGNRLVLTCLAEGSWPLEFKWLHNDSEITTYSSEYKYIIPALQRSDAGFYQCIVRNRMGALLQRRSEVQVAYMGNFMDANQKKTVTEGEAAVLNFMHIFSYPRPQVTWFRDGHKIIPSSRIAITLENQLVILATSVADAGGYYAQAVNEKNGENKTSPLIHLSIASATDPSDPTAPIIVIPPQNKSVVVGTSEVTLECVASARPVERLSIMWKRNGIKITSGISSFGRRLTITNPTSADVGMYFCEAKLRDSTEEPARAKAFISLMVPPYFTAEPEGVILAEVEKDVDILCQAMGVPIPSLVWYKDSVPLSKLQNPRYKVLLSGGLRIHALRPQDAGIFQCFASNKAGEIQTYTYLDVTNIKPAFIQPPEDTTVTEGMTAMLTCEVSGAPKPAISWKKGNQILASGSVQIPRFVLLESGGLQITPVFLQDAGNYTCHAVNSEGALNAFVMLTVWNRTFIVHPPENSTVIKGTTATLRCEATHDPRISIRYVWKKDSVVINPSSSSRITVEKDGTLLISQTWSGDIGDYTCEVISFGGNDSRMARLEVIELPHSPQNLLATLNSSYSRSVVLSWVRPFDGNSPVLYYMVELSENNSPWKVHLSNLDPKMTSVTVSGLTPARTYQFRVCAVNQVGKGQYSSETSRLMLPEEPPSAPPKNIVASGRTNQSIMVQWQPPPESEHNGVLHGYILRYRLAGLPGEYQYKNITSAEINYCLVTDLIIWTQYEIQVASYNGAGLGAFSRPVTEYTLQGVPTAPPQNVQVEAVNSTTIQFLWSPPPQQFINGINQGYKLLAWPVDAPGSVTVVTIAPDFHGVHSGCITNLKKYTTYYTSVLCFTTPGDGPRSAPQLLRTLEDKPGAVGHLSFTEILDTSLKVSWQEPVEKNGIITGYQLSWEVYGRNESRLTRTLTNTTLEYKITGLSSLTTYTIEVAAVTAKGSGWVTSSTISSGVPPELPGAPSNLVISNISPRSATLQFRPGYDGKTSICKWIVEGQVGVLGEEEEWVSLHEVDNEPDAQMLEVPNLTPYTHYRFRMRQVNVVGASPLSQPSRVIQTLQAPPDVAPGSVSVRTASESSLRMRWVPLPDTQYNGNPESVGYRIKFWRVDLQPSALLKVISDRLERECTIQDLEEWTEYELQIQAFNAIGAGPWNEVVGVRTRESVPSAPPENVSAEAVSSTQILLTWSAVPESEQNGLILGYKILYKAKDLDSEPRSQTVRGNHTQSCLLSGLRKYVLYEIRVLAFTRIGDGVPSSPVLTERTKDDAPGPPIRLVFPEVRLTSVRIVWQPPEEPNGIILGYQIAYRLASSSPNKFTTVEVGSTVRQFTATDLTPESAYIFRTSAKTRQGWGEPLEATVITTEKRERPAPPQQLTTPQSDVSSRSLQLHWVPGSDGSSPIRYFTVQVRELPNGDWQTYSSSISHEATSCIIESLNPFTSYKLRVKATNDIGDSDYSAETEAVTTLQDVPDEPPSSVLVTPHTTSSVLVQWQPPKAESLNGLLLGYRIYYRELDYDAGSATESKAVKNPSALRAELTPQSSFKTVNSSSALTTYELTQLKKYKRYEVLMTAYNVIGESPTSTPVEVFVGEAAPAMAPQNIQVNSLSASQLELTWDPPPADSQNGNIQGYKIYYWEGDVQNDTEKVKVFSSLRQLSASKNLTSHTRYLVCISAFNAAGDGPRSRPSAGRTHQAAPSAPSFLVFSEITSTTLNVSWGEPTAANGVLQGYRVVYEPLAPVQGVSKVVTVDIKGNWQRWLKVRDLTKGMTYLFRVQARTIAYGPELQANVTAGPAEGSPGSPHEILVTKSASGLTVQWTEGDSGEKPTTGYIIEARPSDEGLWDMFVKDIPRSATSYTVSLDKLKQGVTYEFRVVAVNEFGYGEPSVPSVAVSAQTEAPFYEEWWFLLVMALSSLILILLVVFALVLHGQSKKYKNCSTGKTISNVEESVTLDNGGFTALELNSRHLNIKSTFSKKNGTRSPPRPSPGGLHYSDEDICNKYNGAVLTEGLGLNEKPLEMSESEATDSDYEDELPKHSFVNHYMSDPTYYNSWKRQQKGVKHPTSYRYEECSASETEPYFQTVITTQSSGGVYTPTGQPAPGSRTPVTGFSSFV.

An N-terminal signal peptide occupies residues 1–50 (MVGRKVDREIIARRNSRRDGMMMKLNFCFFFCRRWWAFLLLQLHMLQALA). The Extracellular portion of the chain corresponds to 51–1961 (QDDVAPYFKT…TEAPFYEEWW (1911 aa)). Ig-like C2-type domains are found at residues 56-138 (PYFK…SEVQ), 143-229 (GNFM…SPLI), 245-333 (PIIV…AFIS), 338-428 (PYFT…LDVT), and 432-521 (PAFI…VMLT). Cys-78 and Cys-121 are disulfide-bonded. N-linked (GlcNAc...) asparagine glycosylation is found at Asn-93, Asn-223, and Asn-253. Disulfide bonds link Cys-267/Cys-314, Cys-360/Cys-410, and Cys-453/Cys-505. N-linked (GlcNAc...) asparagine glycosylation is found at Asn-502, Asn-524, and Asn-534. Residues 525-615 (RTFIVHPPEN…GNDSRMARLE (91 aa)) form the Ig-like C2-type 6 domain. Residues Cys-547 and Cys-599 are joined by a disulfide bond. N-linked (GlcNAc...) asparagine glycans are attached at residues Asn-607, Asn-631, Asn-734, Asn-773, Asn-834, Asn-967, and Asn-977. Fibronectin type-III domains follow at residues 622-718 (SPQN…LPEE), 723-819 (PPKN…TLQG), 824-922 (PPQN…TLED), 926-1020 (AVGH…VPPE), 1024-1123 (APSN…TLQA), 1128-1226 (APGS…TRES), 1231-1328 (PPEN…TKDD), 1332-1426 (PPIR…TEKR), 1431-1528 (PPQQ…TLQD), 1533-1651 (PPSS…VGEA), 1656-1752 (APQN…THQA), 1756-1851 (APSF…AGPA), and 1854-1955 (SPGS…TEAP). N-linked (GlcNAc...) asparagine glycans are attached at residues Asn-1234 and Asn-1285. Positions 1423–1443 (TEKRERPAPPQQLTTPQSDVS) are disordered. Polar residues predominate over residues 1433–1443 (QQLTTPQSDVS). 5 N-linked (GlcNAc...) asparagine glycosylation sites follow: Asn-1606, Asn-1700, Asn-1719, Asn-1771, and Asn-1845. The helical transmembrane segment at 1962–1982 (FLLVMALSSLILILLVVFALV) threads the bilayer. The Cytoplasmic segment spans residues 1983–2169 (LHGQSKKYKN…TPVTGFSSFV (187 aa)). Disordered regions lie at residues 2028-2050 (TFSK…HYSD) and 2145-2169 (GGVY…SSFV). The segment covering 2160-2169 (TPVTGFSSFV) has biased composition (polar residues). The PDZ-binding motif lies at 2163–2169 (TGFSSFV).

It belongs to the sidekick family. As to quaternary structure, homodimer; mediates homophilic interactions to promote cell adhesion. Expressed by non-overlapping subsets of retinal neurons. SDK1, SDK2, DSCAM and DSCAML1 are expressed in non-overlapping subsets of interneurons and retinal ganglion cells (RGCs) that form synapses in distinct inner plexiform layer (IPL) sublaminae.

It is found in the cell membrane. The protein localises to the synapse. Functionally, adhesion molecule that promotes lamina-specific synaptic connections in the retina. Expressed in specific subsets of interneurons and retinal ganglion cells (RGCs) and promotes synaptic connectivity via homophilic interactions. The sequence is that of Protein sidekick-1 from Gallus gallus (Chicken).